The primary structure comprises 488 residues: GTPase Der (488 aa).

2 EngA-type G domains span residues 3-166 (PVVA…AEAM) and 199-372 (IKLA…DSAT). Residues 9–16 (GRPNVGKS), 56–60 (DTGGI), 118–121 (NKVD), 205–212 (GKPNVGKS), 252–256 (DTAGV), and 317–320 (NKWD) each bind GTP. The region spanning 373–457 (RRVSTSMLTR…PIQLRFQEGD (85 aa)) is the KH-like domain. A disordered region spans residues 469–488 (MSQERRRKRALSHIKDRKTK). Residues 473–488 (RRRKRALSHIKDRKTK) are compositionally biased toward basic residues.

It belongs to the TRAFAC class TrmE-Era-EngA-EngB-Septin-like GTPase superfamily. EngA (Der) GTPase family. Associates with the 50S ribosomal subunit.

Its function is as follows. GTPase that plays an essential role in the late steps of ribosome biogenesis. This is GTPase Der from Shewanella sp. (strain W3-18-1).